The following is a 35-amino-acid chain: Turgencin-B (35 aa).

Met-5 and Met-9 each carry methionine sulfoxide. 3 cysteine pairs are disulfide-bonded: Cys-7-Cys-31, Cys-11-Cys-27, and Cys-16-Cys-24. The residue at position 35 (Gly-35) is a Glycine amide.

In terms of processing, oxidation likely reduces antimicrobial activity against Gram-positive bacteria and Gram-negative bacteria.

The protein localises to the secreted. In terms of biological role, has antimicrobial activity against Gram-positive bacteria (C.glutamicum ATCC 13032 (MIC=1.6 uM) and B.subtilis ATCC 23857 (MIC=1.6 uM)) and Gram-negative bacteria (E.coli ATCC 25922 (MIC=12.5 uM) and P.aeruginosa ATCC 27853 (MIC=25.0 uM)). Displays very low activity against the Gram-positive bacteria S.aureus ATCC 9144 (MIC&gt;100 uM). The chain is Turgencin-B from Synoicum turgens (Colonial ascidian).